Here is a 288-residue protein sequence, read N- to C-terminus: Quinate/shikimate dehydrogenase (288 aa).

2 residues coordinate substrate: Lys-71 and Asp-107. NAD(+)-binding positions include 132-135 (AGGA), 155-158 (NRRD), Lys-205, 232-235 (CVYN), and Gly-255.

It belongs to the shikimate dehydrogenase family. Homodimer.

It carries out the reaction L-quinate + NAD(+) = 3-dehydroquinate + NADH + H(+). The enzyme catalyses L-quinate + NADP(+) = 3-dehydroquinate + NADPH + H(+). The catalysed reaction is shikimate + NADP(+) = 3-dehydroshikimate + NADPH + H(+). It catalyses the reaction shikimate + NAD(+) = 3-dehydroshikimate + NADH + H(+). It participates in metabolic intermediate biosynthesis; chorismate biosynthesis; chorismate from D-erythrose 4-phosphate and phosphoenolpyruvate: step 4/7. In terms of biological role, the actual biological function of YdiB remains unclear, nor is it known whether 3-dehydroshikimate or quinate represents the natural substrate. Catalyzes the reversible NAD-dependent reduction of both 3-dehydroshikimate (DHSA) and 3-dehydroquinate to yield shikimate (SA) and quinate, respectively. It can use both NAD or NADP for catalysis, however it has higher catalytic efficiency with NAD. The sequence is that of Quinate/shikimate dehydrogenase from Escherichia coli (strain SMS-3-5 / SECEC).